Reading from the N-terminus, the 207-residue chain is Ras-related protein Rab-7a (207 aa).

An N-acetylthreonine modification is found at Thr-2. GTP contacts are provided by Ser-17, Gly-18, Val-19, Gly-20, Lys-21, Thr-22, Ser-23, Ser-34, Asn-35, Tyr-37, and Thr-40. Thr-22 provides a ligand contact to Mg(2+). The Switch 1 motif lies at 28–41; that stretch reads YVNKKFSNQYKATI. 2 residues coordinate Mg(2+): Thr-40 and Asp-63. Gly-66 contacts GTP. A Switch 2 motif is present at residues 67-82; the sequence is QERFQSLSVAFYRGAD. Ser-72 is modified (phosphoserine). GTP contacts are provided by Asn-125, Lys-126, Asp-128, Ala-156, and Lys-157. Glycyl lysine isopeptide (Lys-Gly) (interchain with G-Cter in ubiquitin) cross-links involve residues Lys-191 and Lys-194. S-geranylgeranyl cysteine attachment occurs at residues Cys-205 and Cys-207. A Cysteine methyl ester modification is found at Cys-207.

It belongs to the small GTPase superfamily. Rab family. As to quaternary structure, interacts with NTRK1/TRKA. Interacts with RILP. Interacts with PSMA7. Interacts with RNF115. Interacts with FYCO1. Interacts with the PIK3C3/VPS34-PIK3R4 complex. The GTP-bound form interacts with OSBPL1A. The GTP-bound form interacts with RAC1. Interacts with CLN3. Interacts with CHM, the substrate-binding subunit of the Rab geranylgeranyltransferase complex. Interacts with C9orf72. Does not interact with HPS4 and the BLOC-3 complex (heterodimer of HPS1 and HPS4). Interacts with CLN5. Interacts with PLEKHM1 (via N- and C-terminus). Interacts with PRPH; the interaction is direct. Interacts with VPS13A. The GDP-bound form interacts with RIMOC1. Interacts with the MON1A-CCZ1B complex and this interaction is enhanced in the presence of RIMOC1. Interacts with VPS39 and VPS41. Forms a ternary complex with LAMP2 and RUFY4; the interaction with LAMP2 is mediated by RUFY4 (via RUN and coiled coil domains). It depends on Mg(2+) as a cofactor. Deubiquitination at Lys-191 and Lys-194 by USP32. In terms of processing, phosphorylated at Ser-72 by LRRK1; phosphorylation is dependent on protein kinase C (PKC) activation of LRRK1. Post-translationally, prenylated. Prenylation is required for association with cellular membranes.

The protein localises to the cytoplasmic vesicle. It localises to the phagosome membrane. Its subcellular location is the late endosome membrane. It is found in the lysosome membrane. The protein resides in the melanosome membrane. The protein localises to the autophagosome membrane. It localises to the lipid droplet. Its subcellular location is the endosome membrane. It is found in the mitochondrion membrane. The enzyme catalyses GTP + H2O = GDP + phosphate + H(+). Regulated by guanine nucleotide exchange factors (GEFs) which promote the exchange of bound GDP for free GTP. Regulated by GTPase activating proteins (GAPs) which increase the GTP hydrolysis activity. Inhibited by GDP dissociation inhibitors (GDIs). In terms of biological role, the small GTPases Rab are key regulators of intracellular membrane trafficking, from the formation of transport vesicles to their fusion with membranes. Rabs cycle between an inactive GDP-bound form and an active GTP-bound form that is able to recruit to membranes different sets of downstream effectors directly responsible for vesicle formation, movement, tethering and fusion. In its active state, RAB7A binds to a variety of effector proteins playing a key role in the regulation of endo-lysosomal trafficking. Governs early-to-late endosomal maturation, microtubule minus-end as well as plus-end directed endosomal migration and positioning, and endosome-lysosome transport through different protein-protein interaction cascades. Also plays a central role in growth-factor-mediated cell signaling, nutrient-transporter-mediated nutrient uptake, neurotrophin transport in the axons of neurons and lipid metabolism. Also involved in regulation of some specialized endosomal membrane trafficking, such as maturation of melanosomes, pathogen-induced phagosomes (or vacuoles) and autophagosomes. Plays a role in the maturation and acidification of phagosomes that engulf pathogens, such as S.aureus and Mycobacteria. Plays a role in the fusion of phagosomes with lysosomes. In concert with RAC1, plays a role in regulating the formation of RBs (ruffled borders) in osteoclasts. Controls the endosomal trafficking and neurite outgrowth signaling of NTRK1/TRKA. Regulates the endocytic trafficking of the EGF-EGFR complex by regulating its lysosomal degradation. Involved in the ADRB2-stimulated lipolysis through lipophagy, a cytosolic lipase-independent autophagic pathway. Required for the exosomal release of SDCBP, CD63 and syndecan. Required for vesicular trafficking and cell surface expression of ACE2. May play a role in PRPH neuronal intermediate filament assembly. The sequence is that of Ras-related protein Rab-7a (RAB7A) from Oryctolagus cuniculus (Rabbit).